The chain runs to 397 residues: Elongation factor Tu (397 aa).

A tr-type G domain is found at 10-206 (KPHVNIGTIG…AVDSYIPTPE (197 aa)). Residues 19-26 (GHVDHGKT) are G1. 19-26 (GHVDHGKT) is a GTP binding site. A Mg(2+)-binding site is contributed by Thr26. Positions 60-64 (GITIN) are G2. The G3 stretch occupies residues 81–84 (DCPG). Residues 81 to 85 (DCPGH) and 136 to 139 (NKAD) contribute to the GTP site. Residues 136 to 139 (NKAD) form a G4 region. The interval 174–176 (SAL) is G5.

This sequence belongs to the TRAFAC class translation factor GTPase superfamily. Classic translation factor GTPase family. EF-Tu/EF-1A subfamily. As to quaternary structure, monomer.

It localises to the cytoplasm. It carries out the reaction GTP + H2O = GDP + phosphate + H(+). GTP hydrolase that promotes the GTP-dependent binding of aminoacyl-tRNA to the A-site of ribosomes during protein biosynthesis. This is Elongation factor Tu from Clostridium perfringens (strain ATCC 13124 / DSM 756 / JCM 1290 / NCIMB 6125 / NCTC 8237 / Type A).